The sequence spans 232 residues: Large ribosomal subunit protein uL1 (232 aa).

The protein belongs to the universal ribosomal protein uL1 family. As to quaternary structure, part of the 50S ribosomal subunit.

In terms of biological role, binds directly to 23S rRNA. The L1 stalk is quite mobile in the ribosome, and is involved in E site tRNA release. Functionally, protein L1 is also a translational repressor protein, it controls the translation of the L11 operon by binding to its mRNA. This chain is Large ribosomal subunit protein uL1, found in Stenotrophomonas maltophilia (strain R551-3).